Consider the following 616-residue polypeptide: Proline dehydrogenase 1, mitochondrial (616 aa).

Belongs to the proline oxidase family. Requires FAD as cofactor.

The protein localises to the mitochondrion matrix. It carries out the reaction L-proline + a quinone = (S)-1-pyrroline-5-carboxylate + a quinol + H(+). It participates in amino-acid degradation; L-proline degradation into L-glutamate; L-glutamate from L-proline: step 1/2. Converts proline to delta-1-pyrroline-5-carboxylate. Through proline catabolism, promotes reactive oxygen species (ROS) production and the transcription of skn-1 target genes in response to bacterial infection by P.aeruginosa. This chain is Proline dehydrogenase 1, mitochondrial, found in Caenorhabditis elegans.